We begin with the raw amino-acid sequence, 146 residues long: Large ribosomal subunit protein uL16 (146 aa).

Belongs to the universal ribosomal protein uL16 family. In terms of assembly, part of the 50S ribosomal subunit.

Its function is as follows. Binds 23S rRNA and is also seen to make contacts with the A and possibly P site tRNAs. This Lactobacillus acidophilus (strain ATCC 700396 / NCK56 / N2 / NCFM) protein is Large ribosomal subunit protein uL16.